A 181-amino-acid chain; its full sequence is Shikimate kinase (181 aa).

An ATP-binding site is contributed by 17-22 (GAGKTT). Thr21 contributes to the Mg(2+) binding site. The substrate site is built by Asp39, Arg63, and Gly85. ATP is bound at residue Arg122. Residue Arg141 coordinates substrate.

It belongs to the shikimate kinase family. As to quaternary structure, monomer. The cofactor is Mg(2+).

The protein resides in the cytoplasm. The catalysed reaction is shikimate + ATP = 3-phosphoshikimate + ADP + H(+). It functions in the pathway metabolic intermediate biosynthesis; chorismate biosynthesis; chorismate from D-erythrose 4-phosphate and phosphoenolpyruvate: step 5/7. Its function is as follows. Catalyzes the specific phosphorylation of the 3-hydroxyl group of shikimic acid using ATP as a cosubstrate. The polypeptide is Shikimate kinase (Trichormus variabilis (strain ATCC 29413 / PCC 7937) (Anabaena variabilis)).